Here is a 275-residue protein sequence, read N- to C-terminus: Large ribosomal subunit protein uL2 (275 aa).

Residues Val224–Gly251 are disordered.

It belongs to the universal ribosomal protein uL2 family. Part of the 50S ribosomal subunit. Forms a bridge to the 30S subunit in the 70S ribosome.

One of the primary rRNA binding proteins. Required for association of the 30S and 50S subunits to form the 70S ribosome, for tRNA binding and peptide bond formation. It has been suggested to have peptidyltransferase activity; this is somewhat controversial. Makes several contacts with the 16S rRNA in the 70S ribosome. The polypeptide is Large ribosomal subunit protein uL2 (Heliobacterium modesticaldum (strain ATCC 51547 / Ice1)).